We begin with the raw amino-acid sequence, 315 residues long: Malate dehydrogenase (315 aa).

NAD(+) contacts are provided by residues 7–12 and Asp32; that span reads GAGNIG. Substrate-binding residues include Arg81 and Arg87. NAD(+)-binding positions include Asn94 and 117–119; that span reads VTN. Positions 119 and 150 each coordinate substrate. His174 acts as the Proton acceptor in catalysis.

This sequence belongs to the LDH/MDH superfamily. MDH type 3 family.

It catalyses the reaction (S)-malate + NAD(+) = oxaloacetate + NADH + H(+). Functionally, catalyzes the reversible oxidation of malate to oxaloacetate. This chain is Malate dehydrogenase, found in Neorickettsia sennetsu (strain ATCC VR-367 / Miyayama) (Ehrlichia sennetsu).